Consider the following 289-residue polypeptide: MEPIWRNYPYPTYPGHHNFQFDPLLSDGSHTGVNQLGGVFVNGRPLADTVRAQIVEMSQHGTRPCDISRQLKVSHGCVSKILGRYYSTGSVRPGVIGGSKPKVATPRVVECIAGYKRANPTMFAWEIRQKLIEDQICGEENVPSVSSINRIVRNKSFMAQLAAPTSVTSSAARPSSATSHHQRSPPRGVQQHMQQSTSVQQLQQLQLTSAATVNSLMTPPAFAMPGTAYSINGLLGTLPQPSLLDDKFTNLSTQSADMSLVYSTGLVGEHDWTMRTPMVILPQNYCGQL.

The paired DNA-binding region spans 29–155 (SHTGVNQLGG…SSINRIVRNK (127 aa)). Positions 32–88 (GVNQLGGVFVNGRPLADTVRAQIVEMSQHGTRPCDISRQLKVSHGCVSKILGRYYST) are PAI subdomain. The tract at residues 107 to 155 (RVVECIAGYKRANPTMFAWEIRQKLIEDQICGEENVPSVSSINRIVRNK) is RED subdomain. Low complexity-rich tracts occupy residues 166–179 (SVTS…SATS) and 189–198 (VQQHMQQSTS). The disordered stretch occupies residues 166-198 (SVTSSAARPSSATSHHQRSPPRGVQQHMQQSTS).

It localises to the nucleus. The protein localises to the chromosome. Its function is as follows. Transcription factor. Binds to specific DNA sequence motifs in regulatory elements, for example in the genes encoding transcription factor lin-48, apoptosis regulator ced-9 and neuropeptide-like protein nlp-2. Specifies cell fate, playing an essential role in embryonic and larval development. Involved in morphogenesis of the vulva and uterus in hermaphrodites and of the rectal epithelium of the tail in males. Plays multiple roles in the development of the egg-laying system, acting in both lin-3/EGF-pathway-dependent and -independent processes. Positively regulates expression of neuropeptide-like proteins nlp-2 and nlp-7 in uvl cells in an EGF-pathway-dependent manner. Involved in negatively modulating apoptosis in germline and somatic cells, acting in partial redundancy with transcription factor pax-2, probably by directly regulating transcription of ced-9. Positively regulates transcription of lin-48 in hindgut cells and functions in the development of the hindgut. This chain is Paired box protein 5 homolog, found in Caenorhabditis elegans.